Here is a 616-residue protein sequence, read N- to C-terminus: Chaperone protein HtpG (616 aa).

Residues 1-333 are a; substrate-binding; that stretch reads MKKQFDTEVN…CQDLPLNVSR (333 aa). Positions 334-542 are b; it reads EILQQNKILS…SNDPTYQMQK (209 aa). Residues 543–616 are c; sequence IMLSMGQEVK…INEFLEKDLL (74 aa).

The protein belongs to the heat shock protein 90 family. Homodimer.

Its subcellular location is the cytoplasm. Functionally, molecular chaperone. Has ATPase activity. The sequence is that of Chaperone protein HtpG from Borreliella afzelii (strain PKo) (Borrelia afzelii).